The following is a 77-amino-acid chain: Translation initiation factor IF-1, chloroplastic (77 aa).

The 71-residue stretch at 1-71 (MKEQKWIHEG…TKGRIIYRIR (71 aa)) folds into the S1-like domain.

The protein belongs to the IF-1 family. As to quaternary structure, component of the 30S ribosomal translation pre-initiation complex which assembles on the 30S ribosome in the order IF-2 and IF-3, IF-1 and N-formylmethionyl-tRNA(fMet); mRNA recruitment can occur at any time during PIC assembly.

Its subcellular location is the plastid. The protein localises to the chloroplast. One of the essential components for the initiation of protein synthesis. Stabilizes the binding of IF-2 and IF-3 on the 30S subunit to which N-formylmethionyl-tRNA(fMet) subsequently binds. Helps modulate mRNA selection, yielding the 30S pre-initiation complex (PIC). Upon addition of the 50S ribosomal subunit IF-1, IF-2 and IF-3 are released leaving the mature 70S translation initiation complex. The sequence is that of Translation initiation factor IF-1, chloroplastic from Vitis vinifera (Grape).